The chain runs to 194 residues: Putative manganese efflux pump MntP (194 aa).

Helical transmembrane passes span 8-28 (LLAI…GIIL), 36-56 (MLIM…LGWL), 61-81 (FSHL…AFLG), 109-129 (MAVA…FLGI), 138-158 (PAGI…IFGI), and 172-192 (LWGG…HLFF).

This sequence belongs to the MntP (TC 9.B.29) family.

Its subcellular location is the cell inner membrane. Probably functions as a manganese efflux pump. The polypeptide is Putative manganese efflux pump MntP (Bacteroides fragilis (strain ATCC 25285 / DSM 2151 / CCUG 4856 / JCM 11019 / LMG 10263 / NCTC 9343 / Onslow / VPI 2553 / EN-2)).